A 622-amino-acid polypeptide reads, in one-letter code: Protein FAM234B (622 aa).

Residues 1–68 are disordered; the sequence is MATVLSRALK…EPDSDAEVAE (68 aa). The residue at position 16 (S16) is a Phosphoserine. Position 26 is a phosphothreonine (T26). Phosphoserine is present on residues S30, S33, and S62. Residues 104–124 form a helical membrane-spanning segment; it reads TSVFLLTLGISMILVLLCAFL.

The protein belongs to the FAM234 family.

The protein localises to the membrane. It is found in the golgi outpost. It localises to the cytoplasm. Its subcellular location is the cytoskeleton. The protein resides in the microtubule organizing center. This is Protein FAM234B from Homo sapiens (Human).